The sequence spans 163 residues: Halocyanin (163 aa).

The N-terminal stretch at 1–24 (MKDISRRRFVLGTGATVAAATLAG) is a signal peptide. Cysteine 25 is subject to N-acetylcysteine. A lipid anchor (S-archaeol cysteine) is attached at cysteine 25. Over residues 26–38 (NGNGNGNGNGNGN) the composition is skewed to gly residues. The disordered stretch occupies residues 26–48 (NGNGNGNGNGNGNGEPDTPEGRA). A Plastocyanin-like domain is found at 48-163 (ADQFLTDNDA…QGMYGAVIVE (116 aa)). 4 residues coordinate Cu cation: histidine 110, cysteine 148, histidine 151, and methionine 156.

It is found in the cell membrane. Its function is as follows. Electron donor. Binds one copper ion. In Natronomonas pharaonis (Natronobacterium pharaonis), this protein is Halocyanin (hcy).